The following is a 630-amino-acid chain: Phosphomethylpyrimidine synthase (630 aa).

Residues N227, M256, Y285, H321, 341–343, 382–385, and E421 each bind substrate; these read SRG and DGLR. H425 contributes to the Zn(2+) binding site. Y448 is a binding site for substrate. Zn(2+) is bound at residue H489. Residues C569, C572, and C577 each contribute to the [4Fe-4S] cluster site.

It belongs to the ThiC family. As to quaternary structure, homodimer. The cofactor is [4Fe-4S] cluster.

The catalysed reaction is 5-amino-1-(5-phospho-beta-D-ribosyl)imidazole + S-adenosyl-L-methionine = 4-amino-2-methyl-5-(phosphooxymethyl)pyrimidine + CO + 5'-deoxyadenosine + formate + L-methionine + 3 H(+). The protein operates within cofactor biosynthesis; thiamine diphosphate biosynthesis. Catalyzes the synthesis of the hydroxymethylpyrimidine phosphate (HMP-P) moiety of thiamine from aminoimidazole ribotide (AIR) in a radical S-adenosyl-L-methionine (SAM)-dependent reaction. This chain is Phosphomethylpyrimidine synthase, found in Hydrogenovibrio crunogenus (strain DSM 25203 / XCL-2) (Thiomicrospira crunogena).